The chain runs to 33 residues: Glucagon-2 (33 aa).

The protein belongs to the glucagon family.

It is found in the secreted. In terms of biological role, promotes hydrolysis of glycogen and lipids, and raises the blood sugar level. The sequence is that of Glucagon-2 (gcg2) from Oreochromis niloticus (Nile tilapia).